The sequence spans 1342 residues: DNA-directed RNA polymerase subunit beta (1342 aa).

The protein belongs to the RNA polymerase beta chain family. The RNAP catalytic core consists of 2 alpha, 1 beta, 1 beta' and 1 omega subunit. When a sigma factor is associated with the core the holoenzyme is formed, which can initiate transcription.

The enzyme catalyses RNA(n) + a ribonucleoside 5'-triphosphate = RNA(n+1) + diphosphate. DNA-dependent RNA polymerase catalyzes the transcription of DNA into RNA using the four ribonucleoside triphosphates as substrates. This is DNA-directed RNA polymerase subunit beta from Colwellia psychrerythraea (strain 34H / ATCC BAA-681) (Vibrio psychroerythus).